The chain runs to 463 residues: Chromosomal replication initiator protein DnaA (463 aa).

The tract at residues 1–90 is domain I, interacts with DnaA modulators; that stretch reads MSLSLWQQCL…KPLSQIISQT (90 aa). Positions 91-126 are domain II; the sequence is VTASVSAPSAPIVRVAAPSRPSWDNAAPQPELSYRS. A domain III, AAA+ region region spans residues 127–343; sequence NVNPKHTFDN…GALNRVIANA (217 aa). Residues glycine 171, glycine 173, lysine 174, and threonine 175 each contribute to the ATP site. Residues 344–463 form a domain IV, binds dsDNA region; it reads NFTGRAITID…FSNLIRTLSS (120 aa).

The protein belongs to the DnaA family. Oligomerizes as a right-handed, spiral filament on DNA at oriC.

The protein localises to the cytoplasm. Plays an essential role in the initiation and regulation of chromosomal replication. ATP-DnaA binds to the origin of replication (oriC) to initiate formation of the DNA replication initiation complex once per cell cycle. Binds the DnaA box (a 9 base pair repeat at the origin) and separates the double-stranded (ds)DNA. Forms a right-handed helical filament on oriC DNA; dsDNA binds to the exterior of the filament while single-stranded (ss)DNA is stabiized in the filament's interior. The ATP-DnaA-oriC complex binds and stabilizes one strand of the AT-rich DNA unwinding element (DUE), permitting loading of DNA polymerase. After initiation quickly degrades to an ADP-DnaA complex that is not apt for DNA replication. Binds acidic phospholipids. The chain is Chromosomal replication initiator protein DnaA from Serratia proteamaculans (strain 568).